We begin with the raw amino-acid sequence, 192 residues long: Ion-translocating oxidoreductase complex subunit A (192 aa).

6 helical membrane-spanning segments follow: residues 5 to 25 (ILLL…FLGL), 39 to 59 (IGMG…AYLV), 72 to 92 (LRTM…EMVV), 102 to 122 (LLGI…VALL), 134 to 154 (IIYG…FASM), and 171 to 191 (SIAM…TGLV).

Belongs to the NqrDE/RnfAE family. As to quaternary structure, the complex is composed of six subunits: RnfA, RnfB, RnfC, RnfD, RnfE and RnfG.

Its subcellular location is the cell inner membrane. In terms of biological role, part of a membrane-bound complex that couples electron transfer with translocation of ions across the membrane. The polypeptide is Ion-translocating oxidoreductase complex subunit A (Vibrio vulnificus (strain CMCP6)).